Reading from the N-terminus, the 583-residue chain is Aspartate--tRNA ligase (583 aa).

Residue Glu174 coordinates L-aspartate. The segment at Gln198–Lys201 is aspartate. Arg220 provides a ligand contact to L-aspartate. ATP is bound by residues Arg220–Glu222 and Gln229. His443 contacts L-aspartate. Glu477 is an ATP binding site. An L-aspartate-binding site is contributed by Arg484. Residue Gly529–Arg532 coordinates ATP.

The protein belongs to the class-II aminoacyl-tRNA synthetase family. Type 1 subfamily. As to quaternary structure, homodimer.

Its subcellular location is the cytoplasm. The enzyme catalyses tRNA(Asp) + L-aspartate + ATP = L-aspartyl-tRNA(Asp) + AMP + diphosphate. In terms of biological role, catalyzes the attachment of L-aspartate to tRNA(Asp) in a two-step reaction: L-aspartate is first activated by ATP to form Asp-AMP and then transferred to the acceptor end of tRNA(Asp). This is Aspartate--tRNA ligase from Streptococcus agalactiae serotype V (strain ATCC BAA-611 / 2603 V/R).